Consider the following 180-residue polypeptide: ATP-dependent protease subunit HslV (180 aa).

Thr-5 is a catalytic residue. 3 residues coordinate Na(+): Gly-161, Cys-164, and Thr-167.

Belongs to the peptidase T1B family. HslV subfamily. In terms of assembly, a double ring-shaped homohexamer of HslV is capped on each side by a ring-shaped HslU homohexamer. The assembly of the HslU/HslV complex is dependent on binding of ATP.

The protein localises to the cytoplasm. The enzyme catalyses ATP-dependent cleavage of peptide bonds with broad specificity.. Allosterically activated by HslU binding. Functionally, protease subunit of a proteasome-like degradation complex believed to be a general protein degrading machinery. This Campylobacter lari (strain RM2100 / D67 / ATCC BAA-1060) protein is ATP-dependent protease subunit HslV.